The sequence spans 353 residues: UPF0283 membrane protein YcjF (353 aa).

Residues 1–19 (MSEPLKPRIDFAEPLKEEP) are compositionally biased toward basic and acidic residues. The interval 1-48 (MSEPLKPRIDFAEPLKEEPTSAFKAQQTFSEAESHTFAPAAIDERPED) is disordered. Topologically, residues 1–69 (MSEPLKPRID…LRPKRSLWRK (69 aa)) are periplasmic. The helical transmembrane segment at 70–90 (MVMGGLALFGASVVGQGVQWT) threads the bilayer. At 91 to 99 (MNAWQTQDW) the chain is on the cytoplasmic side. The helical transmembrane segment at 100 to 120 (VALGGCAAGALIVGAGVGSVV) threads the bilayer. Residues 121–212 (TEWWRLWRLR…ARREISRFAA (92 aa)) lie on the Periplasmic side of the membrane. A helical membrane pass occupies residues 213–233 (ESTLMIAVSPLALVDMAFIAW). At 234 to 353 (RNLRLINRIA…LQKSKSSPEK (120 aa)) the chain is on the cytoplasmic side.

The protein belongs to the UPF0283 family.

The protein resides in the cell inner membrane. This Salmonella typhi protein is UPF0283 membrane protein YcjF (ycjF).